Reading from the N-terminus, the 96-residue chain is Small ubiquitin-related modifier 2 (96 aa).

Lys11 is covalently cross-linked (Glycyl lysine isopeptide (Lys-Gly) (interchain with G-Cter in SUMO)). Residues 16-96 (DHINLKVAGQ…FQQQTGGHRI (81 aa)) form the Ubiquitin-like domain. A Glycyl lysine isopeptide (Gly-Lys) (interchain with K-? in acceptor proteins) cross-link involves residue Gly93. Positions 94–96 (HRI) are excised as a propeptide.

The protein belongs to the ubiquitin family. SUMO subfamily. As to quaternary structure, interacts with sae2 and ube2i. Covalently attached to a number of proteins. In terms of processing, polymeric chains can be formed through Lys-11 cross-linking. Cleavage of precursor form by a sentrin-specific protease is necessary for function.

The protein resides in the nucleus. Functionally, ubiquitin-like protein that can be covalently attached to proteins as a monomer or as a lysine-linked polymer. Covalent attachment via an isopeptide bond to its substrates requires prior activation by the E1 complex sae1-sae2 and linkage to the E2 enzyme ube2i, and can be promoted by an E3 ligase such as pias1-4. This post-translational modification on lysine residues of proteins plays a crucial role in a number of cellular processes such as nuclear transport, DNA replication and repair, mitosis and signal transduction. Polymeric sumo2 chains are also susceptible to polyubiquitination which functions as a signal for proteasomal degradation of modified proteins. The sequence is that of Small ubiquitin-related modifier 2 from Danio rerio (Zebrafish).